A 440-amino-acid chain; its full sequence is Transposon Ty1-NL1 Gag polyprotein (440 aa).

4 stretches are compositionally biased toward polar residues: residues 1–23 (MESQ…SVTS), 48–60 (TKAN…TPAS), 71–86 (SPQT…GPYQ), and 131–152 (PQYP…GNTF). Disordered stretches follow at residues 1–86 (MESQ…GPYQ), 131–171 (PQYP…YVRP), and 350–425 (QQES…TEPI). Low complexity predominate over residues 153–165 (TDSSSADSDMTST). Residues 299–401 (NNGIPINNKV…NSQSRTARAH (103 aa)) form an RNA-binding region. The segment covering 363-372 (NPSDEKKDSR) has biased composition (basic and acidic residues). The span at 373–412 (TYTNTTKPKSITRNSQKPNNSQSRTARAHNVSTSNNSSGP) shows a compositional bias: polar residues.

In terms of assembly, homotrimer.

The protein localises to the cytoplasm. In terms of biological role, capsid protein (CA) is the structural component of the virus-like particle (VLP), forming the shell that encapsulates the retrotransposons dimeric RNA genome. The particles are assembled from trimer-clustered units and there are holes in the capsid shells that allow for the diffusion of macromolecules. CA also has nucleocapsid-like chaperone activity, promoting primer tRNA(i)-Met annealing to the multipartite primer-binding site (PBS), dimerization of Ty1 RNA and initiation of reverse transcription. The chain is Transposon Ty1-NL1 Gag polyprotein (TY1A-NL1) from Saccharomyces cerevisiae (strain ATCC 204508 / S288c) (Baker's yeast).